Here is a 185-residue protein sequence, read N- to C-terminus: UPF0397 protein LGAS_1499 (185 aa).

5 helical membrane-spanning segments follow: residues 6–26 (GLSV…VILA), 46–66 (FLAL…GFIG), 78–98 (TWWS…LYGM), 118–138 (VQII…DILI), and 147–167 (FLQG…LGTI).

It belongs to the UPF0397 family.

The protein resides in the cell membrane. In Lactobacillus gasseri (strain ATCC 33323 / DSM 20243 / BCRC 14619 / CIP 102991 / JCM 1131 / KCTC 3163 / NCIMB 11718 / NCTC 13722 / AM63), this protein is UPF0397 protein LGAS_1499.